Reading from the N-terminus, the 222-residue chain is Ethylene-inducing xylanase 2 (222 aa).

The N-terminal stretch at 1-19 (MITFSSLLVTFSAISTSLA) is a signal peptide. One can recognise a GH11 domain in the interval 36 to 222 (QRNESSLVRR…GEGAATQTVS (187 aa)). 2 N-linked (GlcNAc...) asparagine glycosylation sites follow: asparagine 38 and asparagine 94. Glutamate 120 (nucleophile) is an active-site residue. The Proton donor role is filled by glutamate 209.

This sequence belongs to the glycosyl hydrolase 11 (cellulase G) family.

It catalyses the reaction Endohydrolysis of (1-&gt;4)-beta-D-xylosidic linkages in xylans.. It functions in the pathway glycan degradation; xylan degradation. In terms of biological role, endo-1,4-beta-xylanase involved in the hydrolysis of xylan, a major structural heterogeneous polysaccharide found in plant biomass representing the second most abundant polysaccharide in the biosphere, after cellulose. May act as an elicitor of plant defense responses in certain plants but does not exhibit any cell death when transiently expressed in N.benthamiana. The protein is Ethylene-inducing xylanase 2 of Botryotinia fuckeliana (strain B05.10) (Noble rot fungus).